A 143-amino-acid polypeptide reads, in one-letter code: Large ribosomal subunit protein bL17 (143 aa).

This sequence belongs to the bacterial ribosomal protein bL17 family. Part of the 50S ribosomal subunit. Contacts protein L32.

The chain is Large ribosomal subunit protein bL17 from Bartonella quintana (strain Toulouse) (Rochalimaea quintana).